Reading from the N-terminus, the 906-residue chain is Probable dipeptidyl-aminopeptidase B (906 aa).

Residues 1–11 show a composition bias toward acidic residues; the sequence is MRSSEDREDSE. The disordered stretch occupies residues 1 to 33; that stretch reads MRSSEDREDSELLPANRPRSPSRSSYDSDDSGL. The Cytoplasmic portion of the chain corresponds to 1–85; that stretch reads MRSSEDREDS…TKASSSRSRR (85 aa). Residues 21-33 are compositionally biased toward low complexity; it reads PSRSSYDSDDSGL. The chain crosses the membrane as a helical; Signal-anchor for type II membrane protein span at residues 86 to 106; the sequence is LLWLVVLLCCGGWVVAFVLFI. Residues 107–906 are Vacuolar-facing; it reads TQGRADYRTA…AKRVWPGFAH (800 aa). Residues Asn338 and Asn629 are each glycosylated (N-linked (GlcNAc...) asparagine). Catalysis depends on Ser743, which acts as the Charge relay system. Asn797 is a glycosylation site (N-linked (GlcNAc...) asparagine). Catalysis depends on charge relay system residues Asp820 and His853.

The protein belongs to the peptidase S9B family.

Its subcellular location is the vacuole membrane. The enzyme catalyses Release of an N-terminal dipeptide, Xaa-Yaa-|-Zaa-, from a polypeptide, preferentially when Yaa is Pro, provided Zaa is neither Pro nor hydroxyproline.. Functionally, type IV dipeptidyl-peptidase which removes N-terminal dipeptides sequentially from polypeptides having unsubstituted N-termini provided that the penultimate residue is proline. The chain is Probable dipeptidyl-aminopeptidase B (dapB) from Emericella nidulans (strain FGSC A4 / ATCC 38163 / CBS 112.46 / NRRL 194 / M139) (Aspergillus nidulans).